Here is a 318-residue protein sequence, read N- to C-terminus: Methionyl-tRNA formyltransferase (318 aa).

112–115 contacts (6S)-5,6,7,8-tetrahydrofolate; the sequence is SILP.

It belongs to the Fmt family.

The catalysed reaction is L-methionyl-tRNA(fMet) + (6R)-10-formyltetrahydrofolate = N-formyl-L-methionyl-tRNA(fMet) + (6S)-5,6,7,8-tetrahydrofolate + H(+). In terms of biological role, attaches a formyl group to the free amino group of methionyl-tRNA(fMet). The formyl group appears to play a dual role in the initiator identity of N-formylmethionyl-tRNA by promoting its recognition by IF2 and preventing the misappropriation of this tRNA by the elongation apparatus. This Shewanella sp. (strain MR-7) protein is Methionyl-tRNA formyltransferase.